Reading from the N-terminus, the 512-residue chain is 23S rRNA (uracil(1939)-C(5))-methyltransferase RlmD (512 aa).

Residues 1-14 (MQPTDSKTSTSDTT) show a composition bias toward low complexity. The segment at 1–45 (MQPTDSKTSTSDTTEQPNETQTITIPPSKKKSKPSSKTRRRLKDA) is disordered. Polar residues predominate over residues 15–25 (EQPNETQTITI). Residues 28–42 (SKKKSKPSSKTRRRL) are compositionally biased toward basic residues. Residues 41-113 (RLKDAEPLPF…TSFEEGDAVN (73 aa)) enclose the TRAM domain. Positions 127, 133, 136, and 215 each coordinate [4Fe-4S] cluster. 6 residues coordinate S-adenosyl-L-methionine: Gln-340, Phe-369, Asn-374, Glu-393, Asp-420, and Asp-441. The active-site Nucleophile is Cys-467.

The protein belongs to the class I-like SAM-binding methyltransferase superfamily. RNA M5U methyltransferase family. RlmD subfamily.

It catalyses the reaction uridine(1939) in 23S rRNA + S-adenosyl-L-methionine = 5-methyluridine(1939) in 23S rRNA + S-adenosyl-L-homocysteine + H(+). Its function is as follows. Catalyzes the formation of 5-methyl-uridine at position 1939 (m5U1939) in 23S rRNA. This Psychrobacter arcticus (strain DSM 17307 / VKM B-2377 / 273-4) protein is 23S rRNA (uracil(1939)-C(5))-methyltransferase RlmD.